A 172-amino-acid polypeptide reads, in one-letter code: Epididymal secretory protein 4 (172 aa).

Positions 1–21 (MIAVLLLVFGMTPDYIFPVSA) are cleaved as a signal peptide. Residues C82 and C167 are joined by a disulfide bond.

This sequence belongs to the calycin superfamily. Lipocalin family. In terms of tissue distribution, secreted by the epididymal epithelial cells.

The protein resides in the secreted. It localises to the extracellular space. Functionally, could transport small hydrophobic molecules into the epididymal fluid during the sperm maturation. Binds to the head region of spermatozoa and plays a key role in sperm maturation. The sequence is that of Epididymal secretory protein 4 from Zootoca vivipara (Common lizard).